Reading from the N-terminus, the 240-residue chain is Regulatory protein HlyX (240 aa).

The interval 15-28 (CTIHCQNCSISQLC) is essential for the oxygen-regulated activity. Residues 163–236 (MSAEEKLAAF…GKYITINRMD (74 aa)) enclose the HTH crp-type domain. The H-T-H motif DNA-binding region spans 196–215 (RGDIGNYLGLTIETISRLLG).

It localises to the cytoplasm. In terms of biological role, confers a hemolytic phenotype on E.coli. May regulate, rather than mediate, hemolytic activity. This Actinobacillus pleuropneumoniae (Haemophilus pleuropneumoniae) protein is Regulatory protein HlyX (hlyX).